The following is a 76-amino-acid chain: Putative snRNP Sm-like protein (76 aa).

One can recognise a Sm domain in the interval 4-76; sequence RPLDVIHRSL…VLAISPVDIE (73 aa).

This sequence belongs to the snRNP Sm proteins family.

The protein is Putative snRNP Sm-like protein of Thermococcus gammatolerans (strain DSM 15229 / JCM 11827 / EJ3).